Here is a 467-residue protein sequence, read N- to C-terminus: Histidine--tRNA ligase (467 aa).

This sequence belongs to the class-II aminoacyl-tRNA synthetase family. In terms of assembly, homodimer.

The protein localises to the cytoplasm. It catalyses the reaction tRNA(His) + L-histidine + ATP = L-histidyl-tRNA(His) + AMP + diphosphate + H(+). In Gloeobacter violaceus (strain ATCC 29082 / PCC 7421), this protein is Histidine--tRNA ligase.